A 125-amino-acid chain; its full sequence is Small ribosomal subunit protein uS12 (125 aa).

3-methylthioaspartic acid is present on Asp89.

The protein belongs to the universal ribosomal protein uS12 family. Part of the 30S ribosomal subunit. Contacts proteins S8 and S17. May interact with IF1 in the 30S initiation complex.

Functionally, with S4 and S5 plays an important role in translational accuracy. In terms of biological role, interacts with and stabilizes bases of the 16S rRNA that are involved in tRNA selection in the A site and with the mRNA backbone. Located at the interface of the 30S and 50S subunits, it traverses the body of the 30S subunit contacting proteins on the other side and probably holding the rRNA structure together. The combined cluster of proteins S8, S12 and S17 appears to hold together the shoulder and platform of the 30S subunit. The protein is Small ribosomal subunit protein uS12 of Cupriavidus metallidurans (strain ATCC 43123 / DSM 2839 / NBRC 102507 / CH34) (Ralstonia metallidurans).